The sequence spans 418 residues: Actin-related protein 3B (418 aa).

This sequence belongs to the actin family. ARP3 subfamily. Interacts with the Arp2/3 complex composed of ARP2, ARP3, ARPC1B, ARPC1B/p41-ARC, ARPC2/p34-ARC, ARPC3/p21-ARC, ARPC4/p20-ARC and ARPC5/p16-ARC. As to expression, detected in fetal brain. Detected throughout the adult brain, in neurons from gray matter, but not in white matter. Detected in liver, skeletal muscle and pancreas. Detected in lung adenocarcinoma cells with low metastatic potential, but not in lung adenocarcinoma cells with high metastatic potential.

Its subcellular location is the cytoplasm. The protein localises to the cytoskeleton. The protein resides in the cell projection. Its function is as follows. Plays a role in the organization of the actin cytoskeleton. May function as ATP-binding component of the Arp2/3 complex which is involved in regulation of actin polymerization and together with an activating nucleation-promoting factor (NPF) mediates the formation of branched actin networks. May decrease the metastatic potential of tumors. The chain is Actin-related protein 3B (ACTR3B) from Homo sapiens (Human).